Reading from the N-terminus, the 745-residue chain is Copper-transporting ATPase (745 aa).

Residues 1–67 (MKESFYIEGM…LIEKLGYSPK (67 aa)) form the HMA domain. Over 1-83 (MKESFYIEGM…KKEFFSPNVK (83 aa)) the chain is Cytoplasmic. Positions 12 and 15 each coordinate Cu cation. A helical transmembrane segment spans residues 84–104 (LALAVIFTLFVVYLSMGAMLS). Residues 105–124 (PSLLPESLLTINHHSNFLNA) are Extracellular-facing. Residues 125-144 (CLQLIGALIVMHLGRDFYIQ) form a helical membrane-spanning segment. Residues 145-151 (GFKALWH) are Cytoplasmic-facing. A helical membrane pass occupies residues 152-172 (RQPNMSSLIAIGTSAALISSL). At 173 to 194 (WQLYLVYTNHYTDQWSYGHYYF) the chain is on the extracellular side. Residues 195 to 215 (ESVCVILMFVMVGKRIENVSK) traverse the membrane as a helical segment. At 216-343 (DKALDAMQAL…KAEISRLADK (128 aa)) the chain is on the cytoplasmic side. A helical transmembrane segment spans residues 344–366 (VSSVFVPSVIAIAVLAFVVWLII). Residues 367 to 379 (APKPDFWWNFRTA) are Extracellular-facing. A helical transmembrane segment spans residues 380-397 (LEVFVSVLVISCPCALGL). The Cytoplasmic portion of the chain corresponds to 398 to 685 (ATPMSILVAN…KLSQATIKNI (288 aa)). Catalysis depends on Asp435, which acts as the 4-aspartylphosphate intermediate. Positions 631 and 635 each coordinate Mg(2+). The helical transmembrane segment at 686-705 (KENLFWAFCYNSVFIPLACG) threads the bilayer. Residues 706-716 (VLYKANIMLSP) are Extracellular-facing. Residues 717–735 (AIAGLAMSLSSVSVVLNSQ) form a helical membrane-spanning segment. Topologically, residues 736–745 (RLRNFKIKDH) are cytoplasmic.

The protein belongs to the cation transport ATPase (P-type) (TC 3.A.3) family. Type IB subfamily.

It localises to the cell membrane. The enzyme catalyses Cu(2+)(in) + ATP + H2O = Cu(2+)(out) + ADP + phosphate + H(+). Its function is as follows. Probably involved in copper export. The sequence is that of Copper-transporting ATPase (copA) from Helicobacter pylori (strain J99 / ATCC 700824) (Campylobacter pylori J99).